The chain runs to 295 residues: Phosphonoacetaldehyde hydrolase (295 aa).

Aspartate 36 functions as the Nucleophile in the catalytic mechanism. Aspartate 36 and alanine 38 together coordinate Mg(2+). Lysine 78 (schiff-base intermediate with substrate) is an active-site residue. Aspartate 212 provides a ligand contact to Mg(2+).

The protein belongs to the HAD-like hydrolase superfamily. PhnX family. As to quaternary structure, homodimer. Mg(2+) is required as a cofactor.

The catalysed reaction is phosphonoacetaldehyde + H2O = acetaldehyde + phosphate + H(+). Involved in phosphonate degradation. The sequence is that of Phosphonoacetaldehyde hydrolase from Psychromonas ingrahamii (strain DSM 17664 / CCUG 51855 / 37).